The following is a 98-amino-acid chain: Small ribosomal subunit protein uS19c (98 aa).

This sequence belongs to the universal ribosomal protein uS19 family.

It is found in the plastid. Its subcellular location is the chloroplast. Protein S19 forms a complex with S13 that binds strongly to the 16S ribosomal RNA. This Jasminum nudiflorum (Winter jasmine) protein is Small ribosomal subunit protein uS19c.